The sequence spans 322 residues: CMP-sialic acid transporter 1 (322 aa).

Residues 1–2 are Cytoplasmic-facing; it reads MQ. The chain crosses the membrane as a helical span at residues 3-23; the sequence is WYLVAALLTVLTSSQGILTTL. Topologically, residues 24–33 are lumenal; that stretch reads SQSNGKYKYD. The chain crosses the membrane as a helical span at residues 34–54; the sequence is YATIPFLAELFKLSFSSFFLW. Topologically, residues 55–75 are cytoplasmic; sequence KECQSSSPPRMTKEWRSIRLY. Residues 76–96 form a helical membrane-spanning segment; it reads LVPSVIYLIHNNVQFATLTYV. The Lumenal segment spans residues 97–100; it reads DPST. A helical membrane pass occupies residues 101–120; it reads YQIMGNLKIVTTGILFRLVL. Residues 121–126 are Cytoplasmic-facing; it reads KRKLSN. The chain crosses the membrane as a helical span at residues 127-144; it reads LQWMAVVLLAVGTTTSQV. The Lumenal segment spans residues 145-157; it reads KGCGDAPCDSLFS. Residues 158-178 traverse the membrane as a helical segment; sequence APFQGYMLGILSACLSALAGV. The Cytoplasmic portion of the chain corresponds to 179–198; it reads YTEYLMKKNNDSLYWQNVQL. Residues 199–219 form a helical membrane-spanning segment; the sequence is YTFGVIFNMGWLIYGDFKAGF. The Lumenal portion of the chain corresponds to 220–233; it reads ERGPWWQRLFNGYS. The chain crosses the membrane as a helical span at residues 234-254; the sequence is ITTWMVVFNLGSTGLLVSWLM. Residues 255 to 262 lie on the Cytoplasmic side of the membrane; that stretch reads KYSDNIVK. Residues 263-283 form a helical membrane-spanning segment; sequence VYSTSMGMLLTMVLSVYLFNV. Over 284–286 the chain is Lumenal; it reads RAT.

Belongs to the nucleotide-sugar transporter family. CMP-Sialate:CMP antiporter (TC 2.A.7.12) subfamily.

It is found in the golgi apparatus membrane. In terms of biological role, sugar transporter involved in the transport of CMP-sialic acid from the cytoplasm into the Golgi. May transport important nucleotide sugars such as CMP-Kdo (2-keto-3-deoxy-D-manno-octulosonic acid) in physiological conditions. This chain is CMP-sialic acid transporter 1, found in Oryza sativa subsp. indica (Rice).